A 188-amino-acid chain; its full sequence is GTPase KRas (188 aa).

GTP contacts are provided by residues G10–A18, V29–T35, A59–G60, and N116–D119. The short motif at Y32–Y40 is the Effector region element. The disordered stretch occupies residues K167–M188. C185 carries the cysteine methyl ester modification. C185 carries S-farnesyl cysteine lipidation. Positions V186–M188 are cleaved as a propeptide — removed in mature form.

The protein belongs to the small GTPase superfamily. Ras family.

Its subcellular location is the cell membrane. It localises to the cytoplasm. It catalyses the reaction GTP + H2O = GDP + phosphate + H(+). With respect to regulation, alternates between an inactive form bound to GDP and an active form bound to GTP. Activated by a guanine nucleotide-exchange factor (GEF) and inactivated by a GTPase-activating protein (GAP). Ras proteins bind GDP/GTP and possess intrinsic GTPase activity. Plays an important role in the regulation of cell proliferation. May play a role in promoting oncogenic events by inducing transcriptional silencing of tumor suppressor genes (TSGs). This Cyprinus carpio (Common carp) protein is GTPase KRas (kras).